We begin with the raw amino-acid sequence, 137 residues long: Basic phospholipase A2 PeBP(R)-I/II (137 aa).

The first 16 residues, 1–16 (MRTLWIMAVLLLGVEG), serve as a signal peptide directing secretion. Disulfide bonds link Cys-42-Cys-131, Cys-44-Cys-60, Cys-59-Cys-111, Cys-65-Cys-137, Cys-66-Cys-104, Cys-73-Cys-97, and Cys-91-Cys-102. His-63 is an active-site residue. Residue Asp-105 is part of the active site.

The protein belongs to the phospholipase A2 family. Group II subfamily. R49 sub-subfamily. As to expression, expressed by the venom gland.

The protein resides in the secreted. The catalysed reaction is a 1,2-diacyl-sn-glycero-3-phosphocholine + H2O = a 1-acyl-sn-glycero-3-phosphocholine + a fatty acid + H(+). Its function is as follows. Snake venom phospholipases A2 that have myotoxic, and edema-inducing activity, as well as extremely weak lipolytic activity. PLA2 catalyzes the calcium-dependent hydrolysis of the 2-acyl groups in 3-sn-phosphoglycerides. This Protobothrops elegans (Elegant pitviper) protein is Basic phospholipase A2 PeBP(R)-I/II.